The primary structure comprises 181 residues: Ubiquitin-conjugating enzyme E2 19 (181 aa).

A compositionally biased stretch (polar residues) spans 1–10; that stretch reads MATVNGYTGN. The interval 1–33 is disordered; that stretch reads MATVNGYTGNTPAATTPAATGSKQSAPPTKTVD. Residues 11–20 are compositionally biased toward low complexity; it reads TPAATTPAAT. In terms of domain architecture, UBC core spans 36-181; the sequence is SVLKRLQSEL…VEKLYKPLNA (146 aa). The active-site Glycyl thioester intermediate is cysteine 120.

It belongs to the ubiquitin-conjugating enzyme family. Interacts with OR. Binds to LOT1. In terms of tissue distribution, expressed in all tissues with cell division activities and in mature leaves.

The protein localises to the cytoplasm. The protein resides in the nucleus. The enzyme catalyses S-ubiquitinyl-[E1 ubiquitin-activating enzyme]-L-cysteine + [E2 ubiquitin-conjugating enzyme]-L-cysteine = [E1 ubiquitin-activating enzyme]-L-cysteine + S-ubiquitinyl-[E2 ubiquitin-conjugating enzyme]-L-cysteine.. It functions in the pathway protein modification; protein ubiquitination. In terms of biological role, accepts the ubiquitin from the E1 complex and catalyzes its covalent attachment to other proteins. Part of the anaphase-promoting complex (APC). May have a key function during cell cycle and be involved in cyclin B1 degradation. Triggers OR ubiquitination that mediates its subsequent nuclear localization. Involved in the repression of early light-induced proteins (ELIPs, e.g. ELIP1 and ELIP2) expression, probably via OR nuclear relocalization. The chain is Ubiquitin-conjugating enzyme E2 19 from Arabidopsis thaliana (Mouse-ear cress).